The following is a 204-amino-acid chain: Probable carboxysome shell protein CsoS1E (204 aa).

Composition is skewed to low complexity over residues 1–14 (MPKP…DSPS), 41–84 (SAST…AAGS), and 92–102 (GGAIKPPASSS). Residues 1-102 (MPKPSSSSSS…GAIKPPASSS (102 aa)) are disordered. The BMC domain occupies 111-196 (ALGMIETRGM…PHQEVEPALR (86 aa)).

This sequence belongs to the bacterial microcompartments protein family. Homohexamer.

Its subcellular location is the carboxysome. Functionally, a probable carboxysomal shell protein found only in Prochlorococcus and Synechococcus strains that grow in low light. The chain is Probable carboxysome shell protein CsoS1E from Prochlorococcus marinus (strain MIT 9313).